Reading from the N-terminus, the 82-residue chain is MYHQEQHPVGAPPPQGYPPKDGYPPAGYPPAGYPPPGYAQGYPAQGYPPPQYSQAPQQKQNAGMLEGCLAALCCCCLLDACF.

The interval 1–58 (MYHQEQHPVGAPPPQGYPPKDGYPPAGYPPAGYPPPGYAQGYPAQGYPPPQYSQAPQQ) is disordered. The span at 26–37 (AGYPPAGYPPPG) shows a compositional bias: pro residues. Residues 59–76 (KQNAGMLEGCLAALCCCC) traverse the membrane as a helical segment.

It belongs to the CYSTM1 family. As to quaternary structure, homodimer and heterodimers. Interacts with CYSTM7, CYTSM3, CYTSM4, CYTSM5, CYTSM6, CYTSM9, CYTSM10 and CYTSM11. Binds weakly to CYSTM1 and CYSTM2. In terms of tissue distribution, expressed in root meristem, root vasculature, leaf vasculature and floral organ primordia. Mostly expressed in roots and flowers and, to a lower extent, in stems, siliques and leaves.

It localises to the cell membrane. In terms of biological role, required for the promotion of megasporogenesis, or promotion of germ cell formation from somatic precursor cells. Acts redundantly with WIH2. Functions in a genetic pathway downstream of SPL/NZZ and WUS and together with TRN2 in promoting megasporogenesis. Involved in resistance to abiotic stress. This chain is Protein CYSTEINE-RICH TRANSMEMBRANE MODULE 13, found in Arabidopsis thaliana (Mouse-ear cress).